Here is a 242-residue protein sequence, read N- to C-terminus: Ubiquinone biosynthesis O-methyltransferase (242 aa).

Positions 44, 64, 85, and 129 each coordinate S-adenosyl-L-methionine.

The protein belongs to the methyltransferase superfamily. UbiG/COQ3 family.

It catalyses the reaction a 3-demethylubiquinol + S-adenosyl-L-methionine = a ubiquinol + S-adenosyl-L-homocysteine + H(+). The enzyme catalyses a 3-(all-trans-polyprenyl)benzene-1,2-diol + S-adenosyl-L-methionine = a 2-methoxy-6-(all-trans-polyprenyl)phenol + S-adenosyl-L-homocysteine + H(+). It functions in the pathway cofactor biosynthesis; ubiquinone biosynthesis. Functionally, O-methyltransferase that catalyzes the 2 O-methylation steps in the ubiquinone biosynthetic pathway. This chain is Ubiquinone biosynthesis O-methyltransferase, found in Klebsiella pneumoniae subsp. pneumoniae (strain ATCC 700721 / MGH 78578).